The following is a 131-amino-acid chain: MLFFKSIASLAALVSLAVASPIESRQSATTCGSTNYSASQVRAAANAACQYYQNDDTAGSSTYPHTYNNYEGFDFPVDGPYQEFPIKSGGVYTGGSPGADRVVINTNCEYAGAITHTGASGNNFVGCSGTN.

The signal sequence occupies residues methionine 1–arginine 25. Glutamine 26 is subject to Pyrrolidone carboxylic acid. Intrachain disulfides connect cysteine 31–cysteine 127 and cysteine 49–cysteine 108. Histidine 65 is an active-site residue. Glutamate 83 serves as the catalytic Proton acceptor. Histidine 116 serves as the catalytic Proton donor.

This sequence belongs to the ribonuclease N1/T1 family.

It catalyses the reaction [RNA] containing guanosine + H2O = an [RNA fragment]-3'-guanosine-3'-phosphate + a 5'-hydroxy-ribonucleotide-3'-[RNA fragment].. This Fusarium fujikuroi (Bakanae and foot rot disease fungus) protein is Guanyl-specific ribonuclease F1.